A 386-amino-acid chain; its full sequence is Succinyl-diaminopimelate desuccinylase (386 aa).

His-77 is a binding site for Zn(2+). The active site involves Asp-79. Position 110 (Asp-110) interacts with Zn(2+). Glu-144 acts as the Proton acceptor in catalysis. Zn(2+) is bound by residues Glu-145, Glu-173, and His-359.

This sequence belongs to the peptidase M20A family. DapE subfamily. As to quaternary structure, homodimer. It depends on Zn(2+) as a cofactor. Co(2+) serves as cofactor.

It carries out the reaction N-succinyl-(2S,6S)-2,6-diaminopimelate + H2O = (2S,6S)-2,6-diaminopimelate + succinate. The protein operates within amino-acid biosynthesis; L-lysine biosynthesis via DAP pathway; LL-2,6-diaminopimelate from (S)-tetrahydrodipicolinate (succinylase route): step 3/3. In terms of biological role, catalyzes the hydrolysis of N-succinyl-L,L-diaminopimelic acid (SDAP), forming succinate and LL-2,6-diaminopimelate (DAP), an intermediate involved in the bacterial biosynthesis of lysine and meso-diaminopimelic acid, an essential component of bacterial cell walls. In Ralstonia pickettii (strain 12J), this protein is Succinyl-diaminopimelate desuccinylase.